Here is a 502-residue protein sequence, read N- to C-terminus: Cytochrome P450 3A40 (502 aa).

C443 contacts heme.

The protein belongs to the cytochrome P450 family. Heme is required as a cofactor.

The protein resides in the endoplasmic reticulum membrane. Its subcellular location is the microsome membrane. It catalyses the reaction an organic molecule + reduced [NADPH--hemoprotein reductase] + O2 = an alcohol + oxidized [NADPH--hemoprotein reductase] + H2O + H(+). In Oryzias latipes (Japanese rice fish), this protein is Cytochrome P450 3A40 (cyp3a40).